Here is a 324-residue protein sequence, read N- to C-terminus: Holliday junction branch migration complex subunit RuvB (324 aa).

The tract at residues 1–180 is large ATPase domain (RuvB-L); that stretch reads MKSISCGKEY…FGIPLHLEFY (180 aa). Residues I19, R20, G61, K64, T65, T66, 127-129, R170, Y180, and R217 contribute to the ATP site; that span reads EDF. T65 is a binding site for Mg(2+). Positions 181–251 are small ATPAse domain (RuvB-S); sequence SFEELVNIIK…VADSVLLKLG (71 aa). The tract at residues 254 to 324 is head domain (RuvB-H); it reads KMGLNKLDMN…TDQAKEYLSL (71 aa). DNA-binding residues include R307 and R312.

The protein belongs to the RuvB family. In terms of assembly, homohexamer. Forms an RuvA(8)-RuvB(12)-Holliday junction (HJ) complex. HJ DNA is sandwiched between 2 RuvA tetramers; dsDNA enters through RuvA and exits via RuvB. An RuvB hexamer assembles on each DNA strand where it exits the tetramer. Each RuvB hexamer is contacted by two RuvA subunits (via domain III) on 2 adjacent RuvB subunits; this complex drives branch migration. In the full resolvosome a probable DNA-RuvA(4)-RuvB(12)-RuvC(2) complex forms which resolves the HJ.

The protein resides in the cytoplasm. It catalyses the reaction ATP + H2O = ADP + phosphate + H(+). The RuvA-RuvB-RuvC complex processes Holliday junction (HJ) DNA during genetic recombination and DNA repair, while the RuvA-RuvB complex plays an important role in the rescue of blocked DNA replication forks via replication fork reversal (RFR). RuvA specifically binds to HJ cruciform DNA, conferring on it an open structure. The RuvB hexamer acts as an ATP-dependent pump, pulling dsDNA into and through the RuvAB complex. RuvB forms 2 homohexamers on either side of HJ DNA bound by 1 or 2 RuvA tetramers; 4 subunits per hexamer contact DNA at a time. Coordinated motions by a converter formed by DNA-disengaged RuvB subunits stimulates ATP hydrolysis and nucleotide exchange. Immobilization of the converter enables RuvB to convert the ATP-contained energy into a lever motion, pulling 2 nucleotides of DNA out of the RuvA tetramer per ATP hydrolyzed, thus driving DNA branch migration. The RuvB motors rotate together with the DNA substrate, which together with the progressing nucleotide cycle form the mechanistic basis for DNA recombination by continuous HJ branch migration. Branch migration allows RuvC to scan DNA until it finds its consensus sequence, where it cleaves and resolves cruciform DNA. The sequence is that of Holliday junction branch migration complex subunit RuvB from Wolbachia sp. subsp. Drosophila simulans (strain wRi).